Consider the following 170-residue polypeptide: Adenine phosphoribosyltransferase (170 aa).

The protein belongs to the purine/pyrimidine phosphoribosyltransferase family. In terms of assembly, homodimer.

It is found in the cytoplasm. The catalysed reaction is AMP + diphosphate = 5-phospho-alpha-D-ribose 1-diphosphate + adenine. It participates in purine metabolism; AMP biosynthesis via salvage pathway; AMP from adenine: step 1/1. Catalyzes a salvage reaction resulting in the formation of AMP, that is energically less costly than de novo synthesis. The protein is Adenine phosphoribosyltransferase of Geobacillus thermodenitrificans (strain NG80-2).